Reading from the N-terminus, the 193-residue chain is Acyl carrier protein phosphodiesterase (193 aa).

It belongs to the AcpH family.

It catalyses the reaction holo-[ACP] + H2O = apo-[ACP] + (R)-4'-phosphopantetheine + H(+). Converts holo-ACP to apo-ACP by hydrolytic cleavage of the phosphopantetheine prosthetic group from ACP. This is Acyl carrier protein phosphodiesterase from Yersinia pestis.